The primary structure comprises 120 residues: uncharacterized protein (120 aa).

It to the N-terminal region of phage HK97/HK620 Gp37/hpaH.

This is an uncharacterized protein from Escherichia coli (strain K12).